We begin with the raw amino-acid sequence, 228 residues long: MKISFHGQSCIKIITGDTTILVDPFISGNEKCDLKAEEQMPDFIVLSHGHDDHVGDTVEIAKNSGATVICNADLASFLAVEDGLENMAPMHIGGKRQFSFGQVKLTQAFHGSQTVRDGRIVNLGFPTGIVFTIEDKNIYFAGDTGLFSDMKLIGELNPLDVAFLPIGDNFTMGPEDAAIAARFLQAKLVVPMHYNTFPLIAQDPHKFVASLNEGIAGKVLEIGEGIEI.

The protein belongs to the UPF0173 family.

This Listeria monocytogenes serovar 1/2a (strain ATCC BAA-679 / EGD-e) protein is UPF0173 metal-dependent hydrolase lmo1577.